A 379-amino-acid chain; its full sequence is Queuine tRNA-ribosyltransferase (379 aa).

D94 serves as the catalytic Proton acceptor. Residues 94-98 (DSGGF), D148, Q191, and G218 each bind substrate. An RNA binding region spans residues 249-255 (GVGSPDS). D268 serves as the catalytic Nucleophile. The segment at 273-277 (TRIAR) is RNA binding; important for wobble base 34 recognition. Zn(2+) contacts are provided by C306, C308, C311, and H337.

This sequence belongs to the queuine tRNA-ribosyltransferase family. Homodimer. Within each dimer, one monomer is responsible for RNA recognition and catalysis, while the other monomer binds to the replacement base PreQ1. Zn(2+) is required as a cofactor.

It carries out the reaction 7-aminomethyl-7-carbaguanine + guanosine(34) in tRNA = 7-aminomethyl-7-carbaguanosine(34) in tRNA + guanine. It participates in tRNA modification; tRNA-queuosine biosynthesis. Its function is as follows. Catalyzes the base-exchange of a guanine (G) residue with the queuine precursor 7-aminomethyl-7-deazaguanine (PreQ1) at position 34 (anticodon wobble position) in tRNAs with GU(N) anticodons (tRNA-Asp, -Asn, -His and -Tyr). Catalysis occurs through a double-displacement mechanism. The nucleophile active site attacks the C1' of nucleotide 34 to detach the guanine base from the RNA, forming a covalent enzyme-RNA intermediate. The proton acceptor active site deprotonates the incoming PreQ1, allowing a nucleophilic attack on the C1' of the ribose to form the product. After dissociation, two additional enzymatic reactions on the tRNA convert PreQ1 to queuine (Q), resulting in the hypermodified nucleoside queuosine (7-(((4,5-cis-dihydroxy-2-cyclopenten-1-yl)amino)methyl)-7-deazaguanosine). This is Queuine tRNA-ribosyltransferase from Listeria welshimeri serovar 6b (strain ATCC 35897 / DSM 20650 / CCUG 15529 / CIP 8149 / NCTC 11857 / SLCC 5334 / V8).